The chain runs to 693 residues: A disintegrin and metalloproteinase with thrombospondin motifs like (693 aa).

The N-terminal stretch at 1-24 is a signal peptide; the sequence is MESSVATHWLSAFVILCSFITTQS. Polar residues predominate over residues 67-80; the sequence is IPTSHPANSNSADS. The tract at residues 67–91 is disordered; sequence IPTSHPANSNSADSGKTPHLKTEKV. 2 N-linked (GlcNAc...) asparagine glycosylation sites follow: N124 and N194. One can recognise a Peptidase M12B domain in the interval 353-585; sequence IYPEILVIVD…DTATCLYNSP (233 aa). Cystine bridges form between C485–C580 and C541–C564. A Zn(2+)-binding site is contributed by H514. Residues 514–525 carry the Metal-binding motif; the sequence is HEVGHLLGAVHD. E515 is an active-site residue. 2 residues coordinate Zn(2+): H518 and H524. N-linked (GlcNAc...) asparagine glycosylation occurs at N687.

Requires Zn(2+) as cofactor.

The protein resides in the secreted. The protein localises to the extracellular space. Its subcellular location is the extracellular matrix. In terms of biological role, involved in larval molting and metamorphosis. May degrade extracellular matrix (ECM) and basement membrane (BM) during the development of organs to allow degeneration and remodeling of tissues. The protein is A disintegrin and metalloproteinase with thrombospondin motifs like of Bombyx mori (Silk moth).